The sequence spans 479 residues: D-alanyl-D-alanine carboxypeptidase DacB (479 aa).

The first 26 residues, 1-26, serve as a signal peptide directing secretion; it reads MKKLSSISTALGSFLLSVSFSLPTFA. Serine 69 acts as the Acyl-ester intermediate in catalysis. Catalysis depends on lysine 72, which acts as the Proton acceptor. Residue serine 310 is part of the active site. Position 420 (lysine 420) interacts with substrate.

This sequence belongs to the peptidase S13 family.

It is found in the periplasm. It carries out the reaction Preferential cleavage: (Ac)2-L-Lys-D-Ala-|-D-Ala. Also transpeptidation of peptidyl-alanyl moieties that are N-acyl substituents of D-alanine.. The protein operates within cell wall biogenesis; peptidoglycan biosynthesis. In terms of biological role, not involved in transpeptidation but exclusively catalyzes a DD-carboxypeptidase and DD-endopeptidase reaction. This is D-alanyl-D-alanine carboxypeptidase DacB (dacB) from Haemophilus influenzae (strain ATCC 51907 / DSM 11121 / KW20 / Rd).